The chain runs to 213 residues: ATP-dependent dethiobiotin synthetase BioD (213 aa).

13–18 (GIGKTV) is a binding site for ATP. Mg(2+) is bound at residue Thr17. The active site involves Lys33. Glu100 provides a ligand contact to Mg(2+). ATP-binding positions include 100-103 (EGAG) and 184-186 (PRL).

This sequence belongs to the dethiobiotin synthetase family. As to quaternary structure, homodimer. It depends on Mg(2+) as a cofactor.

The protein localises to the cytoplasm. The enzyme catalyses (7R,8S)-7,8-diammoniononanoate + CO2 + ATP = (4R,5S)-dethiobiotin + ADP + phosphate + 3 H(+). The protein operates within cofactor biosynthesis; biotin biosynthesis; biotin from 7,8-diaminononanoate: step 1/2. Functionally, catalyzes a mechanistically unusual reaction, the ATP-dependent insertion of CO2 between the N7 and N8 nitrogen atoms of 7,8-diaminopelargonic acid (DAPA, also called 7,8-diammoniononanoate) to form a ureido ring. The chain is ATP-dependent dethiobiotin synthetase BioD from Rhodopseudomonas palustris (strain HaA2).